We begin with the raw amino-acid sequence, 195 residues long: Imidazoleglycerol-phosphate dehydratase (195 aa).

Belongs to the imidazoleglycerol-phosphate dehydratase family.

It localises to the cytoplasm. It catalyses the reaction D-erythro-1-(imidazol-4-yl)glycerol 3-phosphate = 3-(imidazol-4-yl)-2-oxopropyl phosphate + H2O. It participates in amino-acid biosynthesis; L-histidine biosynthesis; L-histidine from 5-phospho-alpha-D-ribose 1-diphosphate: step 6/9. In Ruegeria sp. (strain TM1040) (Silicibacter sp.), this protein is Imidazoleglycerol-phosphate dehydratase.